The chain runs to 299 residues: Probable 3-hydroxyisobutyrate dehydrogenase-like 2, mitochondrial (299 aa).

Residues 14 to 43 and Ser-108 contribute to the NAD(+) site; that span reads TRIG…TVYA. Residue Lys-182 is part of the active site. Lys-250 provides a ligand contact to NAD(+).

Belongs to the HIBADH-related family. 3-hydroxyisobutyrate dehydrogenase subfamily.

It is found in the mitochondrion. It catalyses the reaction 3-hydroxy-2-methylpropanoate + NAD(+) = 2-methyl-3-oxopropanoate + NADH + H(+). It participates in amino-acid degradation; L-valine degradation. This Arabidopsis thaliana (Mouse-ear cress) protein is Probable 3-hydroxyisobutyrate dehydrogenase-like 2, mitochondrial.